We begin with the raw amino-acid sequence, 260 residues long: Flap endonuclease Xni (260 aa).

Mg(2+) is bound at residue Asp-104. The 5'-3' exonuclease domain occupies 160-249 (VSPQQLTDYW…LNGNLQQLRL (90 aa)). Positions 171, 172, 180, 182, and 185 each coordinate K(+). The tract at residues 184–189 (GIGPKS) is interaction with DNA.

Belongs to the Xni family. Mg(2+) is required as a cofactor. Requires K(+) as cofactor.

Functionally, has flap endonuclease activity. During DNA replication, flap endonucleases cleave the 5'-overhanging flap structure that is generated by displacement synthesis when DNA polymerase encounters the 5'-end of a downstream Okazaki fragment. The protein is Flap endonuclease Xni of Pectobacterium carotovorum subsp. carotovorum (strain PC1).